Reading from the N-terminus, the 31-residue chain is Cytochrome b6-f complex subunit 6 (31 aa).

A helical transmembrane segment spans residues 4–26; sequence ITSYFGFLLAASTITPALLIGLS.

This sequence belongs to the PetL family. As to quaternary structure, the 4 large subunits of the cytochrome b6-f complex are cytochrome b6, subunit IV (17 kDa polypeptide, PetD), cytochrome f and the Rieske protein, while the 4 small subunits are PetG, PetL, PetM and PetN. The complex functions as a dimer.

The protein localises to the plastid. It is found in the chloroplast thylakoid membrane. Functionally, component of the cytochrome b6-f complex, which mediates electron transfer between photosystem II (PSII) and photosystem I (PSI), cyclic electron flow around PSI, and state transitions. PetL is important for photoautotrophic growth as well as for electron transfer efficiency and stability of the cytochrome b6-f complex. This is Cytochrome b6-f complex subunit 6 from Liriodendron tulipifera (Tuliptree).